The chain runs to 98 residues: Large ribosomal subunit protein uL23 (98 aa).

The protein belongs to the universal ribosomal protein uL23 family. In terms of assembly, part of the 50S ribosomal subunit. Contacts protein L29, and trigger factor when it is bound to the ribosome.

Its function is as follows. One of the early assembly proteins it binds 23S rRNA. One of the proteins that surrounds the polypeptide exit tunnel on the outside of the ribosome. Forms the main docking site for trigger factor binding to the ribosome. The chain is Large ribosomal subunit protein uL23 from Teredinibacter turnerae (strain ATCC 39867 / T7901).